Here is a 1107-residue protein sequence, read N- to C-terminus: Phospholipid-transporting ATPase 2 (1107 aa).

Topologically, residues 1-33 (MKRFVYINDDEASKELCCDNRISNRKYTLWNFL) are cytoplasmic. Residues 34 to 55 (PKNLWEQFSRFMNQYFLLIACL) traverse the membrane as a helical segment. At 56–60 (QLWSL) the chain is on the extracellular side. Residues 61-83 (ITPVNPASTWGPLIFIFAVSASK) traverse the membrane as a helical segment. At 84–268 (EAWDDYHRYL…TAMDAMIDKL (185 aa)) the chain is on the cytoplasmic side. Residues 269-290 (TGAIFVFQIVVVLVLGIAGNVW) form a helical membrane-spanning segment. Over 291–315 (KDTEARKQWYVQYPEEAPWYELLVI) the chain is Extracellular. The helical transmembrane segment at 316 to 333 (PLRFELLCSIMIPISIKV) threads the bilayer. Residues 334 to 807 (SLDLVKGLYA…HGRYSYNRTA (474 aa)) lie on the Cytoplasmic side of the membrane. The active-site 4-aspartylphosphate intermediate is Asp381. Mg(2+)-binding residues include Asp752 and Asp756. The helical transmembrane segment at 808–827 (FLSQYSFYKSLLICFIQIFF) threads the bilayer. At 828 to 841 (SFISGVSGTSLFNS) the chain is on the extracellular side. A helical membrane pass occupies residues 842–860 (VSLMAYNVFYTSVPVLVSV). At 861 to 890 (IDKDLSEASVMQHPQILFYCQAGRLLNPST) the chain is on the cytoplasmic side. Residues 891–912 (FAGWFGRSLFHAIIVFVITIHA) traverse the membrane as a helical segment. Topologically, residues 913 to 919 (YAYEKSE) are extracellular. A helical membrane pass occupies residues 920-942 (MEELGMVALSGCIWLQAFVVAQE). Topologically, residues 943 to 948 (TNSFTV) are cytoplasmic. The chain crosses the membrane as a helical span at residues 949–969 (LQHLSIWGNLVGFYAINFLFS). The Extracellular segment spans residues 970 to 982 (AIPSSGMYTIMFR). A helical membrane pass occupies residues 983–1007 (LCSQPSYWITMFLIVGAGMGPIFAL). Topologically, residues 1008–1107 (KYFRYTYRPS…SGYTRNCKDN (100 aa)) are cytoplasmic. Positions 1048-1075 (DLSPISITQPKNRSPVYEPLLSDSPNAT) are disordered. Ser1050 bears the Phosphoserine mark.

This sequence belongs to the cation transport ATPase (P-type) (TC 3.A.3) family. Type IV subfamily. In terms of assembly, interacts with ALIS1, ALIS3 and ALIS5 in a heterologous system.

The protein localises to the endoplasmic reticulum membrane. It is found in the prevacuolar compartment membrane. The catalysed reaction is ATP + H2O + phospholipidSide 1 = ADP + phosphate + phospholipidSide 2.. Functionally, involved in transport of phospholipids. Contributes to transmembrane flipping of lipids. Requires an interaction with a protein of the ALIS family for activity. Specific for phosphatidylserine and has no activity with lysolipid, phosphatidylcholine or phosphatidylethanolamine. This Arabidopsis thaliana (Mouse-ear cress) protein is Phospholipid-transporting ATPase 2.